The chain runs to 707 residues: DNA ligase (707 aa).

Residues 36–40 (DADFD), 85–86 (SL), and Glu-116 each bind NAD(+). Lys-118 (N6-AMP-lysine intermediate) is an active-site residue. The NAD(+) site is built by Arg-139, Glu-180, Lys-298, and Lys-322. Zn(2+) contacts are provided by Cys-416, Cys-419, Cys-434, and Cys-440. The region spanning 613-707 (AASSKIAGRS…STHVDPERMV (95 aa)) is the BRCT domain.

It belongs to the NAD-dependent DNA ligase family. LigA subfamily. Mg(2+) serves as cofactor. Requires Mn(2+) as cofactor.

It carries out the reaction NAD(+) + (deoxyribonucleotide)n-3'-hydroxyl + 5'-phospho-(deoxyribonucleotide)m = (deoxyribonucleotide)n+m + AMP + beta-nicotinamide D-nucleotide.. In terms of biological role, DNA ligase that catalyzes the formation of phosphodiester linkages between 5'-phosphoryl and 3'-hydroxyl groups in double-stranded DNA using NAD as a coenzyme and as the energy source for the reaction. It is essential for DNA replication and repair of damaged DNA. The protein is DNA ligase of Nitrosospira multiformis (strain ATCC 25196 / NCIMB 11849 / C 71).